Here is a 521-residue protein sequence, read N- to C-terminus: GMP synthase [glutamine-hydrolyzing] (521 aa).

One can recognise a Glutamine amidotransferase type-1 domain in the interval 8–203 (KILILDFGAQ…VVDICGCQTL (196 aa)). The active-site Nucleophile is the Cys-85. Active-site residues include His-177 and Glu-179. The GMPS ATP-PPase domain maps to 204–396 (WTAANIIDDQ…LGLPRTMVYR (193 aa)). 231-237 (SGGVDSS) contributes to the ATP binding site.

Homodimer.

The enzyme catalyses XMP + L-glutamine + ATP + H2O = GMP + L-glutamate + AMP + diphosphate + 2 H(+). It functions in the pathway purine metabolism; GMP biosynthesis; GMP from XMP (L-Gln route): step 1/1. Catalyzes the synthesis of GMP from XMP. The chain is GMP synthase [glutamine-hydrolyzing] from Xanthomonas oryzae pv. oryzae (strain MAFF 311018).